Here is a 476-residue protein sequence, read N- to C-terminus: Protein transport protein Sec61 subunit alpha (476 aa).

Topologically, residues glycine 2–leucine 33 are cytoplasmic. The chain crosses the membrane as a helical span at residues tryptophan 34–isoleucine 53. Residues methionine 54–leucine 76 are Lumenal-facing. Residues methionine 77 to glycine 96 traverse the membrane as a helical segment. Residues alanine 97–lysine 117 lie on the Cytoplasmic side of the membrane. The helical transmembrane segment at leucine 118–glycine 138 threads the bilayer. Topologically, residues aspartate 139–glycine 144 are lumenal. Residues alanine 145–leucine 165 traverse the membrane as a helical segment. Topologically, residues aspartate 166–glycine 172 are cytoplasmic. A helical membrane pass occupies residues tyrosine 173–tryptophan 193. Residues lysine 194–proline 240 are Lumenal-facing. The chain crosses the membrane as a helical span at residues asparagine 241–phenylalanine 261. Over arginine 262–asparagine 288 the chain is Cytoplasmic. A helical membrane pass occupies residues isoleucine 289–serine 309. The Lumenal segment spans residues threonine 310–valine 354. A helical membrane pass occupies residues leucine 355–phenylalanine 375. Residues serine 376–alanine 420 are Cytoplasmic-facing. The chain crosses the membrane as a helical span at residues alanine 421–isoleucine 441. Topologically, residues glycine 442 to threonine 445 are lumenal. The helical transmembrane segment at glycine 446–valine 462 threads the bilayer. Topologically, residues lysine 463–phenylalanine 476 are cytoplasmic.

Belongs to the SecY/SEC61-alpha family. The SEC61 channel-forming translocon complex consists of channel-forming core components SEC61A1, SEC61B and SEC61G and different auxiliary components such as SEC62 and SEC63. The SEC61 channel associates with the multi-pass translocon (MPT) complex.

Its subcellular location is the endoplasmic reticulum membrane. Component of SEC61 channel-forming translocon complex that mediates transport of signal peptide-containing precursor polypeptides across the endoplasmic reticulum (ER). Forms a ribosome receptor and a gated pore in the ER membrane, both functions required for cotranslational translocation of nascent polypeptides. May cooperate with auxiliary protein SEC62, SEC63 and HSPA5/BiP to enable post-translational transport of small presecretory proteins. The SEC61 channel is also involved in ER membrane insertion of transmembrane proteins: it mediates membrane insertion of the first few transmembrane segments of proteins, while insertion of subsequent transmembrane regions of multi-pass membrane proteins is mediated by the multi-pass translocon (MPT) complex. This chain is Protein transport protein Sec61 subunit alpha (sec61a), found in Boreogadus saida (Polar cod).